The chain runs to 149 residues: Myoglobin (149 aa).

Alanine 2 is subject to N-acetylalanine. In terms of domain architecture, Globin spans 2–143 (ABWDKVNSVW…ICSDIEKEYK (142 aa)). Heme b is bound at residue histidine 89.

It belongs to the globin family. As to quaternary structure, monomeric.

Its subcellular location is the cytoplasm. The protein localises to the sarcoplasm. The enzyme catalyses Fe(III)-heme b-[protein] + nitric oxide + H2O = Fe(II)-heme b-[protein] + nitrite + 2 H(+). It catalyses the reaction H2O2 + AH2 = A + 2 H2O. Functionally, monomeric heme protein which primary function is to store oxygen and facilitate its diffusion within muscle tissues. Reversibly binds oxygen through a pentacoordinated heme iron and enables its timely and efficient release as needed during periods of heightened demand. Depending on the oxidative conditions of tissues and cells, and in addition to its ability to bind oxygen, it also has a nitrite reductase activity whereby it regulates the production of bioactive nitric oxide. Under stress conditions, like hypoxia and anoxia, it also protects cells against reactive oxygen species thanks to its pseudoperoxidase activity. The sequence is that of Myoglobin (mb) from Hemitriakis japanica (Japanese topeshark).